We begin with the raw amino-acid sequence, 118 residues long: 5-hydroxyisourate hydrolase (118 aa).

Positions 11, 51, and 115 each coordinate substrate.

The protein belongs to the transthyretin family. 5-hydroxyisourate hydrolase subfamily. In terms of assembly, homotetramer.

It localises to the peroxisome. It carries out the reaction 5-hydroxyisourate + H2O = 5-hydroxy-2-oxo-4-ureido-2,5-dihydro-1H-imidazole-5-carboxylate + H(+). It functions in the pathway purine metabolism; urate degradation; (S)-allantoin from urate: step 2/3. Its function is as follows. Catalyzes the hydrolysis of 5-hydroxyisourate (HIU) to 2-oxo-4-hydroxy-4-carboxy-5-ureidoimidazoline (OHCU). The polypeptide is 5-hydroxyisourate hydrolase (Urah) (Mus musculus (Mouse)).